The primary structure comprises 509 residues: Transcription factor SOX-9 (509 aa).

2 disordered regions span residues 1–66 and 160–271; these read MNLL…ESEE and RLRV…IDFR. The span at 27-41 shows a compositional bias: low complexity; sequence SEGSRGSPCPSGSGS. Positions 42-52 are enriched in polar residues; sequence DTENTRPQENT. 2 stretches are compositionally biased toward basic and acidic residues: residues 56–66 and 160–174; these read GEPDLKKESEE and RLRV…DYKY. The segment at 63–103 is dimerization (DIM); it reads ESEEDKFPVCIREAVSQVLKGYDWTLVPMPVRVNGSSKNKP. The segment at 63–103 is PQA; sequence ESEEDKFPVCIREAVSQVLKGYDWTLVPMPVRVNGSSKNKP. Ser-64 carries the post-translational modification Phosphoserine. The segment at residues 105–173 is a DNA-binding region (HMG box); that stretch reads VKRPMNAFMV…QHKKDHPDYK (69 aa). Ser-211 carries the post-translational modification Phosphoserine. A transactivation domain (TAM) region spans residues 224 to 307; it reads PGEHSGQSQG…LPPNGHPGVP (84 aa). 2 consecutive short sequence motifs (9aaTAD) follow at residues 275-284 and 290-298; these read IGELSSDVIS and DVNEFDQYL. Disordered stretches follow at residues 335–415 and 420–439; these read WMSK…QHSP and YSPF…TRSQ. Positions 341-359 are enriched in pro residues; that stretch reads APPPPPHPPQQPPPVPQAP. Residues 360-369 are compositionally biased toward low complexity; that stretch reads AQPQAALPQQ. The span at 380–415 shows a compositional bias: polar residues; that stretch reads HTLTTLSSEPGQSQRTHIKTEQLSPSHYSEQQQHSP. Positions 394–509 are transactivation domain (TAC); sequence RTHIKTEQLS…QPVYTQLTRP (116 aa). Lys-398 is covalently cross-linked (Glycyl lysine isopeptide (Lys-Gly) (interchain with G-Cter in ubiquitin)). The short motif at 460–468 is the 9aaTAD 3 element; it reads SVLYSTFTY. The disordered stretch occupies residues 479–509; that stretch reads PIADTSGVPSIPQTHSPQHWEQPVYTQLTRP. The span at 485-509 shows a compositional bias: polar residues; it reads GVPSIPQTHSPQHWEQPVYTQLTRP.

Homodimer; homodimerization is required for activity. Interacts (via C-terminus) with ZNF219; forming a complex that binds to the COL2A1 promoter and activates COL2A1 expression. Interacts with DDRGK1. Interacts with EP300/p300. Interacts with beta-catenin (CTNNB1); inhibiting CTNNB1 activity by competing with the binding sites of TCF/LEF within CTNNB1. In terms of processing, acetylated; acetylation impairs nuclear localization and ability to transactivate expression of target genes. Deacetylated by SIRT1. Post-translationally, phosphorylation at Ser-64 and Ser-211 by PKA increases transcriptional activity and may help delay chondrocyte maturation downstream of PTHLH/PTHrP signaling. Phosphorylation at either Ser-64 or Ser-211 is required for sumoylation, but phosphorylation is not dependent on sumoylation. Phosphorylated on tyrosine residues; tyrosine dephosphorylation by PTPN11/SHP2 blocks SOX9 phosphorylation by PKA and subsequent SUMOylation. Sumoylated; phosphorylation at either Ser-64 or Ser-211 is required for sumoylation. Sumoylation is induced by BMP signaling pathway. In terms of processing, ubiquitinated; ubiquitination leads to proteasomal degradation and is negatively regulated by DDRGK1.

The protein resides in the nucleus. Functionally, transcription factor that plays a key role in chondrocytes differentiation and skeletal development. Specifically binds the 5'-ACAAAG-3' DNA motif present in enhancers and super-enhancers and promotes expression of genes important for chondrogenesis, including cartilage matrix protein-coding genes COL2A1, COL4A2, COL9A1, COL11A2 and ACAN, SOX5 and SOX6. Also binds to some promoter regions. Plays a central role in successive steps of chondrocyte differentiation. Absolutely required for precartilaginous condensation, the first step in chondrogenesis during which skeletal progenitors differentiate into prechondrocytes. Together with SOX5 and SOX6, required for overt chondrogenesis when condensed prechondrocytes differentiate into early stage chondrocytes, the second step in chondrogenesis. Later, required to direct hypertrophic maturation and block osteoblast differentiation of growth plate chondrocytes: maintains chondrocyte columnar proliferation, delays prehypertrophy and then prevents osteoblastic differentiation of chondrocytes by lowering beta-catenin (CTNNB1) signaling and RUNX2 expression. Also required for chondrocyte hypertrophy, both indirectly, by keeping the lineage fate of chondrocytes, and directly, by remaining present in upper hypertrophic cells and transactivating COL10A1 along with MEF2C. Low lipid levels are the main nutritional determinant for chondrogenic commitment of skeletal progenitor cells: when lipids levels are low, FOXO (FOXO1 and FOXO3) transcription factors promote expression of SOX9, which induces chondrogenic commitment and suppresses fatty acid oxidation. Mechanistically, helps, but is not required, to remove epigenetic signatures of transcriptional repression and deposit active promoter and enhancer marks at chondrocyte-specific genes. Acts in cooperation with the Hedgehog pathway-dependent GLI (GLI1 and GLI3) transcription factors. In addition to cartilage development, also acts as a regulator of proliferation and differentiation in epithelial stem/progenitor cells: involved in the lung epithelium during branching morphogenesis, by balancing proliferation and differentiation and regulating the extracellular matrix. Controls epithelial branching during kidney development. The sequence is that of Transcription factor SOX-9 (SOX9) from Sus scrofa (Pig).